A 375-amino-acid chain; its full sequence is UDP-N-acetylglucosamine--N-acetylmuramyl-(pentapeptide) pyrophosphoryl-undecaprenol N-acetylglucosamine transferase (375 aa).

UDP-N-acetyl-alpha-D-glucosamine contacts are provided by residues 15–17 (TGG), Asn-126, Arg-169, Ser-197, and Gln-298.

It belongs to the glycosyltransferase 28 family. MurG subfamily.

Its subcellular location is the cell inner membrane. The catalysed reaction is di-trans,octa-cis-undecaprenyl diphospho-N-acetyl-alpha-D-muramoyl-L-alanyl-D-glutamyl-meso-2,6-diaminopimeloyl-D-alanyl-D-alanine + UDP-N-acetyl-alpha-D-glucosamine = di-trans,octa-cis-undecaprenyl diphospho-[N-acetyl-alpha-D-glucosaminyl-(1-&gt;4)]-N-acetyl-alpha-D-muramoyl-L-alanyl-D-glutamyl-meso-2,6-diaminopimeloyl-D-alanyl-D-alanine + UDP + H(+). The protein operates within cell wall biogenesis; peptidoglycan biosynthesis. Its function is as follows. Cell wall formation. Catalyzes the transfer of a GlcNAc subunit on undecaprenyl-pyrophosphoryl-MurNAc-pentapeptide (lipid intermediate I) to form undecaprenyl-pyrophosphoryl-MurNAc-(pentapeptide)GlcNAc (lipid intermediate II). The polypeptide is UDP-N-acetylglucosamine--N-acetylmuramyl-(pentapeptide) pyrophosphoryl-undecaprenol N-acetylglucosamine transferase (Rhodopseudomonas palustris (strain BisB18)).